The following is a 243-amino-acid chain: MEDSFLQSFGRLSLQPQQQQQRQRPPRPPPRGTPPRRHSFRKHLYLLRGLPGSGKTTLARQLQHDFPRALIFSTDDFFFREDGAYEFNPDFLEEAHEWNQKRARKAMRNGISPIIIDNTNLHAWEMKPYAVMALENNYEVIFREPDTRWKFNVQELARRNIHGVSREKIHRMKERYEHDVTFHSVLHAEKPSRMNRNQDRNNALPSNNARYWNSYTEFPNRRAHGGFTNESSYHRRGGCHHGY.

The interval 1–38 (MEDSFLQSFGRLSLQPQQQQQRQRPPRPPPRGTPPRRH) is disordered.

Interacts with dynactin subunit proteins, including DCTN4, DCTN5 and DCTN5.

In terms of biological role, might play a role in adipocyte differentiation and triglyceride accumulation. This is NEDD4-binding protein 2-like 1 (N4BP2L1) from Homo sapiens (Human).